Here is a 140-residue protein sequence, read N- to C-terminus: Large ribosomal subunit protein uL16 (140 aa).

The protein belongs to the universal ribosomal protein uL16 family. Part of the 50S ribosomal subunit.

In terms of biological role, binds 23S rRNA and is also seen to make contacts with the A and possibly P site tRNAs. This Citrifermentans bemidjiense (strain ATCC BAA-1014 / DSM 16622 / JCM 12645 / Bem) (Geobacter bemidjiensis) protein is Large ribosomal subunit protein uL16.